Reading from the N-terminus, the 199-residue chain is Probable GTP-binding protein EngB (199 aa).

Positions 21–195 (IYTEIAFLGR…EQKIILESLG (175 aa)) constitute an EngB-type G domain. GTP contacts are provided by residues 29 to 36 (GRSNVGKS), 56 to 60 (GKTQL), 81 to 84 (DLPG), 151 to 154 (TKAD), and 174 to 176 (VSN). Positions 36 and 58 each coordinate Mg(2+).

Belongs to the TRAFAC class TrmE-Era-EngA-EngB-Septin-like GTPase superfamily. EngB GTPase family. Mg(2+) is required as a cofactor.

Its function is as follows. Necessary for normal cell division and for the maintenance of normal septation. This Campylobacter lari (strain RM2100 / D67 / ATCC BAA-1060) protein is Probable GTP-binding protein EngB.